The primary structure comprises 70 residues: ATP synthase subunit c (70 aa).

The next 2 membrane-spanning stretches (helical) occupy residues 4–24 (IAAA…NGLI) and 45–65 (LMFI…VIAF).

It belongs to the ATPase C chain family. As to quaternary structure, F-type ATPases have 2 components, F(1) - the catalytic core - and F(0) - the membrane proton channel. F(1) has five subunits: alpha(3), beta(3), gamma(1), delta(1), epsilon(1). F(0) has three main subunits: a(1), b(2) and c(10-14). The alpha and beta chains form an alternating ring which encloses part of the gamma chain. F(1) is attached to F(0) by a central stalk formed by the gamma and epsilon chains, while a peripheral stalk is formed by the delta and b chains.

The protein resides in the cell membrane. F(1)F(0) ATP synthase produces ATP from ADP in the presence of a proton or sodium gradient. F-type ATPases consist of two structural domains, F(1) containing the extramembraneous catalytic core and F(0) containing the membrane proton channel, linked together by a central stalk and a peripheral stalk. During catalysis, ATP synthesis in the catalytic domain of F(1) is coupled via a rotary mechanism of the central stalk subunits to proton translocation. The protein is ATP synthase subunit c of Bacillus pumilus (strain SAFR-032).